The following is a 498-amino-acid chain: ATP synthase subunit beta, chloroplastic (498 aa).

172-179 serves as a coordination point for ATP; it reads GGAGVGKT.

The protein belongs to the ATPase alpha/beta chains family. In terms of assembly, F-type ATPases have 2 components, CF(1) - the catalytic core - and CF(0) - the membrane proton channel. CF(1) has five subunits: alpha(3), beta(3), gamma(1), delta(1), epsilon(1). CF(0) has four main subunits: a(1), b(1), b'(1) and c(9-12).

Its subcellular location is the plastid. It localises to the chloroplast thylakoid membrane. The catalysed reaction is ATP + H2O + 4 H(+)(in) = ADP + phosphate + 5 H(+)(out). In terms of biological role, produces ATP from ADP in the presence of a proton gradient across the membrane. The catalytic sites are hosted primarily by the beta subunits. This is ATP synthase subunit beta, chloroplastic from Beta vulgaris (Sugar beet).